We begin with the raw amino-acid sequence, 694 residues long: Acetolactate synthase catalytic subunit, mitochondrial (694 aa).

A mitochondrion-targeting transit peptide spans 1–42 (MLRSRQATNALRAVGQTRPLRSQTAVAFTQSLNKVPSNRRSE). A compositionally biased stretch (low complexity) spans 45 to 58 (VATASSTASGAFNS). A disordered region spans residues 45–69 (VATASSTASGAFNSQVRPTPSPTFN). Residues 59–69 (QVRPTPSPTFN) show a composition bias toward polar residues. Glu140 provides a ligand contact to thiamine diphosphate. FAD contacts are provided by residues Arg242, 358–379 (HGSA…LGGR), and 410–429 (EIMP…IVGD). The segment at 505–585 (QHQMWTAQHF…VKVIVLNNEE (81 aa)) is thiamine pyrophosphate binding. 3 residues coordinate Mg(2+): Asp556, Asn583, and Glu585.

It belongs to the TPP enzyme family. In terms of assembly, homodimer. Requires Mg(2+) as cofactor. Thiamine diphosphate serves as cofactor.

Its subcellular location is the mitochondrion. The enzyme catalyses 2 pyruvate + H(+) = (2S)-2-acetolactate + CO2. It catalyses the reaction 2-oxobutanoate + pyruvate + H(+) = (S)-2-ethyl-2-hydroxy-3-oxobutanoate + CO2. The protein operates within amino-acid biosynthesis; L-isoleucine biosynthesis; L-isoleucine from 2-oxobutanoate: step 1/4. Its pathway is amino-acid biosynthesis; L-valine biosynthesis; L-valine from pyruvate: step 1/4. In terms of biological role, acetolactate synthase catalytic subunit, mitochondrial; part of the gene cluster that mediates the biosynthesis of chlorflavonin, a fungal flavonoid with acetolactate synthase inhibitory activity. Is not direcly involved in chlorflavonin biosynthesis but acts as a self-resistant protein that effectively confers chlorflavonin resistance to the native host. As a catalytic subunit of mitochondrial acetolactate synthase, catalyzes the first of a series of common steps in the biosynthesis of the branched-chain amino acids. Catalyzes the irreversible decarboxylation of pyruvate to a bound hydroxyethyl group that then condenses with either a second pyruvate molecule to form 2-acetolactate (AL) or with 2-ketobutyrate to form 2-aceto-2-hydroxybutyrate (AHB). The first product is the precursor for valine and leucine biosynthesis, while the second leads to isoleucine. The sequence is that of Acetolactate synthase catalytic subunit, mitochondrial from Aspergillus candidus.